A 151-amino-acid chain; its full sequence is Large ribosomal subunit protein eL19 (151 aa).

The span at 57-81 (KKGISSARVKKLKEQRKKGRRRGPG) shows a compositional bias: basic residues. The interval 57–95 (KKGISSARVKKLKEQRKKGRRRGPGSRRGAAGARTPPKE) is disordered.

It belongs to the eukaryotic ribosomal protein eL19 family. As to quaternary structure, part of the 50S ribosomal subunit.

Its function is as follows. Binds to the 23S rRNA. The protein is Large ribosomal subunit protein eL19 of Methanocaldococcus jannaschii (strain ATCC 43067 / DSM 2661 / JAL-1 / JCM 10045 / NBRC 100440) (Methanococcus jannaschii).